Reading from the N-terminus, the 514-residue chain is 2,3-bisphosphoglycerate-independent phosphoglycerate mutase (514 aa).

Mn(2+) contacts are provided by Asp-13 and Ser-63. The active-site Phosphoserine intermediate is Ser-63. Substrate-binding positions include His-124, 154–155 (RD), Arg-186, Arg-192, 258–261 (RADR), and Lys-332. Mn(2+) is bound by residues Asp-399, His-403, Asp-440, His-441, and His-459.

It belongs to the BPG-independent phosphoglycerate mutase family. Monomer. Mn(2+) is required as a cofactor.

The catalysed reaction is (2R)-2-phosphoglycerate = (2R)-3-phosphoglycerate. It functions in the pathway carbohydrate degradation; glycolysis; pyruvate from D-glyceraldehyde 3-phosphate: step 3/5. Catalyzes the interconversion of 2-phosphoglycerate and 3-phosphoglycerate. The sequence is that of 2,3-bisphosphoglycerate-independent phosphoglycerate mutase from Legionella pneumophila subsp. pneumophila (strain Philadelphia 1 / ATCC 33152 / DSM 7513).